Here is a 579-residue protein sequence, read N- to C-terminus: 2-isopropylmalate synthase (579 aa).

The 276-residue stretch at 33–308 folds into the Pyruvate carboxyltransferase domain; that stretch reads PRWLSTDLRD…DPGIDFSDIN (276 aa). The Mg(2+) site is built by Asp42, His247, His249, and Asn283. Residues 450-579 form a regulatory domain region; the sequence is SSDLPVPLAS…IVAPLVAAGR (130 aa).

The protein belongs to the alpha-IPM synthase/homocitrate synthase family. LeuA type 2 subfamily. Homodimer. Mg(2+) serves as cofactor.

Its subcellular location is the cytoplasm. The catalysed reaction is 3-methyl-2-oxobutanoate + acetyl-CoA + H2O = (2S)-2-isopropylmalate + CoA + H(+). It participates in amino-acid biosynthesis; L-leucine biosynthesis; L-leucine from 3-methyl-2-oxobutanoate: step 1/4. Functionally, catalyzes the condensation of the acetyl group of acetyl-CoA with 3-methyl-2-oxobutanoate (2-ketoisovalerate) to form 3-carboxy-3-hydroxy-4-methylpentanoate (2-isopropylmalate). This is 2-isopropylmalate synthase from Streptosporangium roseum (strain ATCC 12428 / DSM 43021 / JCM 3005 / KCTC 9067 / NCIMB 10171 / NRRL 2505 / NI 9100).